The sequence spans 566 residues: Zinc finger protein 704 (566 aa).

Disordered stretches follow at residues 1 to 148, 166 to 203, and 253 to 324; these read MQAR…ARGA, DFRR…LDQE, and PLVR…DEAD. Positions 12–31 are enriched in low complexity; it reads LGSRRGGAAPAPAPEAAALG. A compositionally biased stretch (pro residues) spans 32-55; the sequence is LPPPGPSPAAAPGSWRPPLPPPRG. The span at 56–72 shows a compositional bias: low complexity; the sequence is TGPSRAAAASSPVLLLL. Residues 91 to 100 show a composition bias toward basic and acidic residues; it reads RVTEKPRGVA. A compositionally biased stretch (acidic residues) spans 101–128; that stretch reads EEEDDDEEEDEEVVVEVVDGDEDDEDAE. The span at 186–203 shows a compositional bias: basic and acidic residues; sequence EDVRTADTKKTSRVLDQE. Low complexity predominate over residues 267–290; the sequence is SGSWKEGAPSSSSSSGYWSWSAPS. The C2H2-type zinc finger occupies 346-371; the sequence is FKCLWKSCGKVLNTAAGIQKHIRAVH. 2 positions are modified to phosphoserine: Ser378 and Ser381. 2 disordered regions span residues 409–436 and 497–535; these read VSPS…CAKT and PVSP…PRGE. A sufficient for binding to RE2 sequence motifs region spans residues 471 to 566; sequence GSAKFTPNGS…WKKACQRFID (96 aa). The CR1 motif lies at 537–541; sequence KKCRK. The short motif at 555–559 is the CR2 element; it reads CRWKK.

It localises to the nucleus. Its function is as follows. Transcription factor which binds to RE2 sequence elements in the MYOD1 enhancer. The sequence is that of Zinc finger protein 704 from Mus musculus (Mouse).